The following is a 1614-amino-acid chain: MAGPAPSGRTPSHAQSSLPSLPAHLQSDTHLTAHLASRFHVGLPTARLSSQALISLNTYTTSSRGPDGDKEGSAMGEAEDLAKRAFTRLGARGENQAIVFLHSSGESGSGKTTIRSHLLSSFLSFSSTPLSSKLSYAAFVFDTLTTTKSVTTPTASKAGLFLELQYDGSSSVNPTLIGGKIIDHRLERSRIASVPTGERSFHVLYYLLAGTSAAEKEHLGFDSSIHVSTSGGKLSGASIGHKRWRYLGHPTQLKVGINDADGFQHFKTALRKLEFPRSEIAEFCQILATILHLGQLDFVSGQATTTTAEESGGYSHEGGETVTVVKNKDVLSVIAAFLGLGVEELETSFGYRTKTIRRERVTVMLDPKGARQNADGLARTLYSLLVAYIFEGINQRICAAEDSVANTVSILDFPGFSQASATGSTLDQLLSNAATESLYNFCLQSFFERKAEMLDREEVTVPATSYFDNSDATRGLLKSGNGLLSILDDQTKRGRTDSQFLESVKKRFENKNPAITVGSTGQGTTLISQGARSAFTVKHFAGEVDYPVQGLLEENGDVVSGDLMNLMRSTSSDFVRDLFGQEALQTVTHPQERTAIMQAQVSSKPMRMPSMARRKAGPSRLAFDAPEGDDQDEYDSQAGSMSKSSARRKSTMLANGMQGAAGQFLSSLDIVSKCLNSANLNPYFVFCLKPNDRRIANQFDSKCVRAQVQTFGIAEISQRLRNADFSIFLPFAEFLGLAEIGNVVVGSDKEKSEVVLDEKRWPGNEARVGSTGVFLSERCWADLAKLGERVVPVFPAEGSDEGGDNLLHARAGGYADSKVRLLGPTDQSPGGFIYGEDGKQGYSSSREFDGRSDAGASAFNSGDMFRNLDTREQMLEKGNEKKMEEVDEAPVSGSRKRWMAIVYLLTFYIPDFLIKTFGRMPRKDVRVAWREKLAINLIIWFSCAFAIFFIVAFPGLICPTQHVYSTAELSSHNGKDGHNSFVAIRGIVFNLDKFMPSHYPDIVPEKSLKKYAGTDATGLFPVQVSALCPGKDGSIDPTVLLDYSSTNVSGSATTVSTSDTNWVYHDFRYFTNDSRPDWFQEQMIMLKANYFKGWIGYTPTYMKTLGDKSQYIGSINGRVYDLTTYVAGGRRVQAPVGKSVPANVDRDFMDDLVVELFQRLPGQDLTKYWEDLQISDVMRERMQLCLDNLFFVGHVDTRNSPRCQFARYFILAISIFICLIVVFKFLAALQFSRKNLPENLDKFIICQVPAYTEDEESLRRAIDSMARMRYDDKRKLLVVICDGMIIGQGNDRPTPRIVLDILGVPESVDPEPLSFESLGEGMKQHNMGKIYSGLYEVMGHIVPFLVVVKVGKPSEVARPGNRGKRDSQMVLMRFLNRVHYNLPMSPMELEIYHQIRNIIGVNPTFYEFILQVDADTVVAPDAATRMVSTLLADTRILGVCGETALSNAKTSMVTMIQVYEYYISHNLVKAFESLFGSITCLPGCFTMYRIRSADSGKPLFVSKEIVEAYSEIRVDTLHMKNLLHLGEDRYLTTLLIKHHPKYKTKYISAAKAFTIAPESFAVFLSQRRRWINSTVHNLIELIPLNQLCGFCCFSMRFIVFVDLISTIIQPVTVA.

Residues 1-22 (MAGPAPSGRTPSHAQSSLPSLP) form a disordered region. In terms of domain architecture, Myosin motor spans 1 to 788 (MAGPAPSGRT…CWADLAKLGE (788 aa)). The span at 9 to 19 (RTPSHAQSSLP) shows a compositional bias: polar residues. Position 105-112 (105-112 (GESGSGKT)) interacts with ATP. The interval 600 to 650 (QVSSKPMRMPSMARRKAGPSRLAFDAPEGDDQDEYDSQAGSMSKSSARRKS) is disordered. Positions 626-635 (PEGDDQDEYD) are enriched in acidic residues. Residues 668-692 (LDIVSKCLNSANLNPYFVFCLKPND) form an actin-binding region. 2 helical membrane passes run 898-918 (WMAI…KTFG) and 937-957 (LIIW…PGLI). The Cytochrome b5 heme-binding domain maps to 961–1020 (QHVYSTAELSSHNGKDGHNSFVAIRGIVFNLDKFMPSHYPDIVPEKSLKKYAGTDATGLF). N-linked (GlcNAc...) asparagine glycosylation is found at asparagine 1047 and asparagine 1072. The chain crosses the membrane as a helical span at residues 1209-1229 (FILAISIFICLIVVFKFLAAL). An N-linked (GlcNAc...) asparagine glycan is attached at asparagine 1572.

In the N-terminal section; belongs to the TRAFAC class myosin-kinesin ATPase superfamily. Myosin family. It in the C-terminal section; belongs to the chitin synthase family. Class V subfamily.

The protein localises to the cell membrane. It localises to the cell septum. The protein resides in the cell tip. The enzyme catalyses [(1-&gt;4)-N-acetyl-beta-D-glucosaminyl](n) + UDP-N-acetyl-alpha-D-glucosamine = [(1-&gt;4)-N-acetyl-beta-D-glucosaminyl](n+1) + UDP + H(+). In terms of biological role, polymerizes chitin, a structural polymer of the cell wall and septum, by transferring the sugar moiety of UDP-GlcNAc to the non-reducing end of the growing chitin polymer. Acts as the major chitin synthase in Aspergillus niger involved in cell wall integrity which is principally responsible for chitin synthesis at the lateral cell wall. Plays an important role in septal growth or maintenance. Mediates colony spore formation. The chain is Chitin synthase csmA from Aspergillus niger (strain ATCC MYA-4892 / CBS 513.88 / FGSC A1513).